A 219-amino-acid chain; its full sequence is Probable GTP-binding protein EngB (219 aa).

The 175-residue stretch at 31 to 205 folds into the EngB-type G domain; the sequence is VGVEIAFAGR…LSILNEWCHP (175 aa). Residues 39 to 46, 66 to 70, 84 to 87, 151 to 154, and 184 to 186 contribute to the GTP site; these read GRSNAGKS, GRTQL, DLPG, TKSD, and FSA. Mg(2+) contacts are provided by S46 and T68.

Belongs to the TRAFAC class TrmE-Era-EngA-EngB-Septin-like GTPase superfamily. EngB GTPase family. It depends on Mg(2+) as a cofactor.

In terms of biological role, necessary for normal cell division and for the maintenance of normal septation. In Shewanella sp. (strain W3-18-1), this protein is Probable GTP-binding protein EngB.